Reading from the N-terminus, the 739-residue chain is NAD(P)H-quinone oxidoreductase subunit 5, chloroplastic (739 aa).

16 consecutive transmembrane segments (helical) span residues 9–29 (WIIP…LLLV), 39–59 (IWAF…ADLA), 89–109 (IDPL…MVLI), 125–145 (FAYM…SNLI), 147–167 (IYIF…FWFT), 185–205 (GDFG…SFEF), 224–244 (LFAA…SAQF), 258–278 (TPIS…FLVA), 280–300 (LLPL…IGII), 327–347 (LGYI…FHLI), 354–374 (ALLF…VGYS), 396–416 (TTFF…CFWS), 425–445 (WLYS…TAFY), 544–564 (LFPM…GIPF), 603–623 (IYSV…YGSV), and 716–736 (ISSY…IYYF).

The protein belongs to the complex I subunit 5 family. NDH is composed of at least 16 different subunits, 5 of which are encoded in the nucleus.

Its subcellular location is the plastid. It is found in the chloroplast thylakoid membrane. It carries out the reaction a plastoquinone + NADH + (n+1) H(+)(in) = a plastoquinol + NAD(+) + n H(+)(out). It catalyses the reaction a plastoquinone + NADPH + (n+1) H(+)(in) = a plastoquinol + NADP(+) + n H(+)(out). NDH shuttles electrons from NAD(P)H:plastoquinone, via FMN and iron-sulfur (Fe-S) centers, to quinones in the photosynthetic chain and possibly in a chloroplast respiratory chain. The immediate electron acceptor for the enzyme in this species is believed to be plastoquinone. Couples the redox reaction to proton translocation, and thus conserves the redox energy in a proton gradient. The polypeptide is NAD(P)H-quinone oxidoreductase subunit 5, chloroplastic (ndhF) (Acorus calamus (Sweet flag)).